A 423-amino-acid polypeptide reads, in one-letter code: MNILQNLKKSDPIISNLINSEKNRQETHLELIASENFASMAVMQAQGSVLTNKYAEGLPQKRYYGGCEFVDEIEELAIERAKQLFDADWANVQPHSGAQANAAVFLSLLNPGDTILGMDLSHGGHLTHGSPVNMSGKWFNAVHYGVDKETNKLNFNVIRDIALATKPKLIICGYSAYPRTIDFKSFRSIADEVGAFLMADIAHIAGLVASKLHPNPIPYCDVVTTTTHKTLRGPRGGLILCKDKEFGKKFDKSVFPGTQGGPLEHIIAAKAVAFGEALQPNFVNYSKQVIKNAKVLSSTLINRGIDIVSGGTDNHIVLLDLRSINMTGKVADLLVSEVNITANKNTVPFDPESPFVTSGLRLGTAALTTRGFNDEAFIEVGEIIADRLLNPDDLLIEKECKERVLSLCNSFPLYEAKLESSIK.

Residues L120 and 124-126 (GHL) each bind (6S)-5,6,7,8-tetrahydrofolate. Residue K229 is modified to N6-(pyridoxal phosphate)lysine. 353 to 355 (SPF) is a binding site for (6S)-5,6,7,8-tetrahydrofolate.

This sequence belongs to the SHMT family. As to quaternary structure, homodimer. The cofactor is pyridoxal 5'-phosphate.

Its subcellular location is the cytoplasm. The catalysed reaction is (6R)-5,10-methylene-5,6,7,8-tetrahydrofolate + glycine + H2O = (6S)-5,6,7,8-tetrahydrofolate + L-serine. It participates in one-carbon metabolism; tetrahydrofolate interconversion. The protein operates within amino-acid biosynthesis; glycine biosynthesis; glycine from L-serine: step 1/1. Functionally, catalyzes the reversible interconversion of serine and glycine with tetrahydrofolate (THF) serving as the one-carbon carrier. This reaction serves as the major source of one-carbon groups required for the biosynthesis of purines, thymidylate, methionine, and other important biomolecules. Also exhibits THF-independent aldolase activity toward beta-hydroxyamino acids, producing glycine and aldehydes, via a retro-aldol mechanism. The polypeptide is Serine hydroxymethyltransferase (Prochlorococcus marinus (strain MIT 9515)).